The chain runs to 747 residues: MSDTASTATGHRKRDKPQLSCNACRKRKRVRCDRLHPCSNCASRGLGSTCTFAAISSPTNMPPSHGHSIPVQHRVESARPGPTNSMQTRINQLENLVIELMNQNNTPGMRTGLQNQGSDARSDARCQPTPLSSETEFEYPVAPSPSDHGSINTRLARPTYVSSSHWAAIFDSITELRNHFVQEDIEHGASTVLPSSTVPKPQILYGAWTSETPHAIISSLPPRTTVDRLISRYFNVLDIAPGVVHSTQFLREYENFWMAPQDAPIMWVGLLFAMMCLSAQLQQASLPAHDSRPSSSRASQQDSIAIYREKTIQCLQLGHYTMGGTHALETLILYFLGECFNLKDMEIGIWILSGTILQIAIHMGYHRDAKNFPSITPFAGEMRRRVWAMIVQLDFSISAQLGLPTLIKASQTDTAEPRNLYDTDFDEDSSALPESRPETEVTPTLYVLAKLRLISIGLRVTNVASESRTRSYSDVLELDRQLREARDALPSSLKWIDLGTSLNVSSQTILQRIWLEVTIQQLTIVLHKKFLGVSGLQKDFKTSRAACLNAAVKILELQRLVDDETQPDGLLYQSRWRVSSAFSNDFLLATSILCYCLQNRPEGTISNFDESVSVGLDQIRALLETSKSIWSRQCAESKEAHKAVAALRYVLGHSGADVDSGYTVAERQPLPMPTAALSYFPDLTSDYNFAGFDFGSSDTTRWTAFASDELGEENWSRGAGFQQMDMSLKLEAFDRVVPNSIPSRCLS.

The zn(2)-C6 fungal-type DNA-binding region spans 21 to 50 (CNACRKRKRVRCDRLHPCSNCASRGLGSTC). Disordered regions lie at residues 112-150 (GLQN…DHGS) and 414-436 (TAEP…PESR).

Its subcellular location is the nucleus. Functionally, transcription factor that regulates the expression of the gene cluster that mediates the biosynthesis of the trans-fused decalin-containing tetramic acid phomasetin. The sequence is that of Transcription factor phm2 from Pyrenochaetopsis sp.